The sequence spans 441 residues: MVIFSTGFNYKTAPVEIREKLAITENNYGLILEKLNSIEDIYEICVISTCNRVELYGVSNDNIEKVKEEILRILSQYSTVPVNTLKDYLFFYTNKEAIRHIFRVSSSLDSMVIGEPQIVCQFKDSFTKAKEYKAVRHILTRLFDKALNVSKKIRTSTGISRRAVSISYAAVLLAKKIFGDLKDKNVLIIGAGEMAELAAKHLHSLNVKHIFVSNRTFEKAVELADKFSGSAIRFEKIQEFLPEADIIIVSTGAKEPILKKEDVKRAIKSRKDPLFIIDISVPRNVEESVNELEGVYLYNIDDLKQVVNSNLEERKIEAQRAEFIIDEEVEKFVKWLNALKVSPIISSVRDYADKLRQQQLEKLFKQMPYLNEKERETIDLAMRSLINKLLHRPTMYIKDKAAKEGNTEVVKIFEDMFSSKWDFRKKGKNLEEIEDIVREEQ.

Substrate is bound by residues T49 to R52, S110, E115 to Q117, and Q121. C50 acts as the Nucleophile in catalysis. Residue G190 to A195 coordinates NADP(+).

This sequence belongs to the glutamyl-tRNA reductase family. In terms of assembly, homodimer.

The enzyme catalyses (S)-4-amino-5-oxopentanoate + tRNA(Glu) + NADP(+) = L-glutamyl-tRNA(Glu) + NADPH + H(+). It functions in the pathway porphyrin-containing compound metabolism; protoporphyrin-IX biosynthesis; 5-aminolevulinate from L-glutamyl-tRNA(Glu): step 1/2. Its function is as follows. Catalyzes the NADPH-dependent reduction of glutamyl-tRNA(Glu) to glutamate 1-semialdehyde (GSA). The polypeptide is Glutamyl-tRNA reductase (Sulfurihydrogenibium sp. (strain YO3AOP1)).